A 348-amino-acid polypeptide reads, in one-letter code: uncharacterized protein (348 aa).

The signal sequence occupies residues 1 to 26; the sequence is MKKRIILLLAVIIAAAAAGVAFYVAK.

This is an uncharacterized protein from Bacillus subtilis (strain 168).